Reading from the N-terminus, the 137-residue chain is Small ribosomal subunit protein uS11 (137 aa).

Disordered stretches follow at residues 1 to 32 (MPPKSRASGPKKTQKSRRRDKKNVPHGNAHIK) and 118 to 137 (ISDVTPQPHNGCRPPKRRRV). Residues 12–21 (KTQKSRRRDK) are compositionally biased toward basic residues.

This sequence belongs to the universal ribosomal protein uS11 family. Part of the 30S ribosomal subunit. Interacts with proteins S7 and S18. Binds to IF-3.

Its function is as follows. Located on the platform of the 30S subunit, it bridges several disparate RNA helices of the 16S rRNA. Forms part of the Shine-Dalgarno cleft in the 70S ribosome. The sequence is that of Small ribosomal subunit protein uS11 from Nocardia farcinica (strain IFM 10152).